A 139-amino-acid polypeptide reads, in one-letter code: Small ribosomal subunit protein uS12 (139 aa).

A disordered region spans residues 12–55; it reads RVDKVKKSDSPALNKGYNSFKKSQTDVSSPQKRGVCTRVGTMTP. A compositionally biased stretch (polar residues) spans 27–42; the sequence is GYNSFKKSQTDVSSPQ. Position 102 is a 3-methylthioaspartic acid (Asp-102). Positions 119–139 are disordered; the sequence is GVQNRMQGRSKYGTKKPKDKK. Residues 130 to 139 show a composition bias toward basic residues; it reads YGTKKPKDKK.

Belongs to the universal ribosomal protein uS12 family. In terms of assembly, part of the 30S ribosomal subunit. Contacts proteins S8 and S17. May interact with IF1 in the 30S initiation complex.

Its function is as follows. With S4 and S5 plays an important role in translational accuracy. In terms of biological role, interacts with and stabilizes bases of the 16S rRNA that are involved in tRNA selection in the A site and with the mRNA backbone. Located at the interface of the 30S and 50S subunits, it traverses the body of the 30S subunit contacting proteins on the other side and probably holding the rRNA structure together. The combined cluster of proteins S8, S12 and S17 appears to hold together the shoulder and platform of the 30S subunit. In Shouchella clausii (strain KSM-K16) (Alkalihalobacillus clausii), this protein is Small ribosomal subunit protein uS12.